We begin with the raw amino-acid sequence, 597 residues long: Aspartate--tRNA(Asp/Asn) ligase (597 aa).

E175 contributes to the L-aspartate binding site. Positions 199–202 are aspartate; sequence QQYK. The L-aspartate site is built by R221 and H454. 221–223 contributes to the ATP binding site; sequence RDE. E488 serves as a coordination point for ATP. Residue R495 coordinates L-aspartate. Position 540–543 (540–543) interacts with ATP; sequence GIDR.

It belongs to the class-II aminoacyl-tRNA synthetase family. Type 1 subfamily. As to quaternary structure, homodimer.

The protein resides in the cytoplasm. The enzyme catalyses tRNA(Asx) + L-aspartate + ATP = L-aspartyl-tRNA(Asx) + AMP + diphosphate. Functionally, aspartyl-tRNA synthetase with relaxed tRNA specificity since it is able to aspartylate not only its cognate tRNA(Asp) but also tRNA(Asn). Reaction proceeds in two steps: L-aspartate is first activated by ATP to form Asp-AMP and then transferred to the acceptor end of tRNA(Asp/Asn). This chain is Aspartate--tRNA(Asp/Asn) ligase, found in Bartonella tribocorum (strain CIP 105476 / IBS 506).